A 258-amino-acid polypeptide reads, in one-letter code: Serine/arginine-rich splicing factor x16 (258 aa).

The RRM domain occupies R8–G81. Disordered stretches follow at residues G81–G113 and C130–D258. Gly residues predominate over residues S86–G103. Over residues G104 to G113 the composition is skewed to basic and acidic residues. The CCHC-type zinc finger occupies K116–E132. 2 stretches are compositionally biased toward basic residues: residues C130–S141 and S149–S166. Composition is skewed to basic and acidic residues over residues N180–N197 and R210–R221. Low complexity-rich tracts occupy residues R231–G240 and S249–D258.

Interacts (via Arg/Ser-rich region) with Alsin2/CG7564, Rbp1 and Doa (via N-terminus). In terms of processing, highly phosphorylated. May be phosphorylated by the serine/threonine-protein kinase Doa.

The protein resides in the nucleus. Its function is as follows. Serine/arginine-rich splicing factor (SR protein) involved in differential exon usage during RNA transcript processing, probably by binding exonic splicing enhancer elements and recruiting components of the splicing machinery. Binds RNA stem-loop structures with consensus sequence 5'-CCGUNUNKNW-3'. Regulator of genes involved in lipid and carbohydrate metabolism, the immune response and the response to xenobiotics. In Drosophila melanogaster (Fruit fly), this protein is Serine/arginine-rich splicing factor x16.